The primary structure comprises 278 residues: GTPase Era (278 aa).

The 162-residue stretch at 7–168 (YCGYIAIVGK…ENLIYPYLPN (162 aa)) folds into the Era-type G domain. Positions 15 to 22 (GKPNVGKS) are G1. A GTP-binding site is contributed by 15–22 (GKPNVGKS). The interval 41 to 45 (NTTQK) is G2. The tract at residues 62–65 (DTPG) is G3. GTP-binding positions include 62–66 (DTPGI) and 117–120 (NKID). A G4 region spans residues 117-120 (NKID). Residues 147–149 (ISA) are G5. A KH type-2 domain is found at 199–276 (LRDELPSIIT…YLIIWVKVKI (78 aa)).

Belongs to the TRAFAC class TrmE-Era-EngA-EngB-Septin-like GTPase superfamily. Era GTPase family. As to quaternary structure, monomer.

The protein localises to the cytoplasm. Its subcellular location is the cell membrane. Its function is as follows. An essential GTPase that binds both GDP and GTP, with rapid nucleotide exchange. Plays a role in 16S rRNA processing and 30S ribosomal subunit biogenesis and possibly also in cell cycle regulation and energy metabolism. This is GTPase Era from Buchnera aphidicola subsp. Schizaphis graminum (strain Sg).